The chain runs to 213 residues: Imidazole glycerol phosphate synthase subunit HisH (213 aa).

Residues 4–213 form the Glutamine amidotransferase type-1 domain; that stretch reads SIAIVDYGMG…LYRNFVHWNP (210 aa). The active-site Nucleophile is the Cys83. Active-site residues include His193 and Glu195.

In terms of assembly, heterodimer of HisH and HisF.

It localises to the cytoplasm. The enzyme catalyses 5-[(5-phospho-1-deoxy-D-ribulos-1-ylimino)methylamino]-1-(5-phospho-beta-D-ribosyl)imidazole-4-carboxamide + L-glutamine = D-erythro-1-(imidazol-4-yl)glycerol 3-phosphate + 5-amino-1-(5-phospho-beta-D-ribosyl)imidazole-4-carboxamide + L-glutamate + H(+). The catalysed reaction is L-glutamine + H2O = L-glutamate + NH4(+). It participates in amino-acid biosynthesis; L-histidine biosynthesis; L-histidine from 5-phospho-alpha-D-ribose 1-diphosphate: step 5/9. Functionally, IGPS catalyzes the conversion of PRFAR and glutamine to IGP, AICAR and glutamate. The HisH subunit catalyzes the hydrolysis of glutamine to glutamate and ammonia as part of the synthesis of IGP and AICAR. The resulting ammonia molecule is channeled to the active site of HisF. The protein is Imidazole glycerol phosphate synthase subunit HisH of Burkholderia pseudomallei (strain K96243).